The sequence spans 306 residues: Serine/threonine-protein phosphatase 2A catalytic subunit A (306 aa).

Residues Asp-54, His-56, Asp-82, and Asn-114 each coordinate Mn(2+). His-115 acts as the Proton donor in catalysis. Positions 164 and 238 each coordinate Mn(2+). Residue Leu-306 is modified to Leucine methyl ester.

Belongs to the PPP phosphatase family. PP-2A subfamily. PP2A consists of a trimeric holoenzyme, composed of a 37 kDa catalytic subunit (C subunit) and a 65 kDa constant regulatory subunit (A subunit), that associates with a variety of regulatory subunits (B subunit) such as phr2AB (B55) and psrA (B56 homolog). The trimer may partially dissociates into a core 'AC' dimer equally active compared to the trimer. Mn(2+) is required as a cofactor. In terms of processing, reversibly methyl esterified on Leu-306 by leucine carboxyl methyltransferase 1 (LCMT) and protein phosphatase methylesterase 1 (PPME1). Carboxyl methylation influences the affinity of the catalytic subunit for the different regulatory subunits, thereby modulating the PP2A holoenzyme's substrate specificity, enzyme activity and cellular localization.

It localises to the cytoplasm. The protein localises to the cytosol. Its subcellular location is the nucleus speckle. The enzyme catalyses O-phospho-L-seryl-[protein] + H2O = L-seryl-[protein] + phosphate. It carries out the reaction O-phospho-L-threonyl-[protein] + H2O = L-threonyl-[protein] + phosphate. Plays a role in activating the myosin contractile function. Dephosphorylates threonine at 'Thr-1823', 'Thr-1833' and 'Thr-2029' in the C-terminal tail region of myosin II heavy chain (mhcA). Drives the assembly of dephosphorylated myosin II filaments to allow myosin recruitment into the cytoskeleton. This Dictyostelium discoideum (Social amoeba) protein is Serine/threonine-protein phosphatase 2A catalytic subunit A (pho2a).